Reading from the N-terminus, the 420-residue chain is Cell division protein FtsA (420 aa).

Belongs to the FtsA/MreB family. As to quaternary structure, self-interacts. Interacts with FtsZ.

It localises to the cell inner membrane. In terms of biological role, cell division protein that is involved in the assembly of the Z ring. May serve as a membrane anchor for the Z ring. The polypeptide is Cell division protein FtsA (Escherichia coli O157:H7).